The following is a 160-amino-acid chain: Protein max (160 aa).

Residues 1–13 (MSDNDDIEVESDE) are compositionally biased toward acidic residues. Residues 1-40 (MSDNDDIEVESDEEQPRFQSAADKRAHHNALERKRRDHIK) form a disordered region. Serine 2 is subject to N-acetylserine. A phosphoserine mark is found at serine 2 and serine 11. Residues 23–74 (DKRAHHNALERKRRDHIKDSFHSLRDSVPSLQGEKASRAQILDKATEYIQYM) enclose the bHLH domain. Over residues 29–40 (NALERKRRDHIK) the composition is skewed to basic and acidic residues. An N6-acetyllysine modification is found at lysine 66. A leucine-zipper region spans residues 81 to 102 (HQQDIDDLKRQNALLEQQVRAL). Residues 103 to 160 (EKARSSAQLQTNYPSSDNSLYTNAKGSTISAFDGGSDSSSESEPEEPQSRKKLRMEAS) are disordered. Phosphoserine is present on serine 107. Positions 107–132 (SSAQLQTNYPSSDNSLYTNAKGSTIS) are enriched in polar residues. The Nuclear localization signal motif lies at 152 to 156 (RKKLR). An N6-acetyllysine mark is found at lysine 153 and lysine 154.

Belongs to the MAX family. As to quaternary structure, efficient DNA binding requires dimerization with another bHLH protein. Binds DNA as a heterodimer with MYC or MAD. Part of the E2F6.com-1 complex in G0 phase composed of E2F6, MGA, MAX, TFDP1, CBX3, BAT8, EUHMTASE1, RING1, RNF2, MBLR, L3MBTL2 and YAF2. Component of some MLL1/MLL complex, at least composed of the core components KMT2A/MLL1, ASH2L, HCFC1/HCF1, WDR5 and RBBP5, as well as the facultative components BACC1, CHD8, E2F6, HSP70, INO80C, KANSL1, LAS1L, MAX, MCRS1, MGA, MYST1/MOF, PELP1, PHF20, PRP31, RING2, RUVB1/TIP49A, RUVB2/TIP49B, SENP3, TAF1, TAF4, TAF6, TAF7, TAF9 and TEX10. Interacts with SPAG9. The heterodimer MYC:MAX interacts with ABI1; the interaction may enhance MYC:MAX transcriptional activity. Reversible lysine acetylation might regulate the nuclear-cytoplasmic shuttling of specific Max complexes. In terms of tissue distribution, high levels found in the brain, heart and lung while lower levels are seen in the liver, kidney and skeletal muscle.

Its subcellular location is the nucleus. It localises to the cell projection. The protein localises to the dendrite. Functionally, transcription regulator. Forms a sequence-specific DNA-binding protein complex with MYC or MAD which recognizes the core sequence 5'-CAC[GA]TG-3'. The MYC:MAX complex is a transcriptional activator, whereas the MAD:MAX complex is a repressor. May repress transcription via the recruitment of a chromatin remodeling complex containing H3 'Lys-9' histone methyltransferase activity. Represses MYC transcriptional activity from E-box elements. This Homo sapiens (Human) protein is Protein max.